Here is a 144-residue protein sequence, read N- to C-terminus: tRNA-specific adenosine deaminase (144 aa).

One can recognise a CMP/dCMP-type deaminase domain in the interval 1–116 (MEQALKQAGI…SNLRYFNSSV (116 aa)). His-48 contributes to the Zn(2+) binding site. Catalysis depends on Glu-50, which acts as the Proton donor. The Zn(2+) site is built by Cys-78 and Cys-81.

The protein belongs to the cytidine and deoxycytidylate deaminase family. Homodimer. The cofactor is Zn(2+).

It carries out the reaction adenosine(34) in tRNA + H2O + H(+) = inosine(34) in tRNA + NH4(+). In terms of biological role, catalyzes the deamination of adenosine to inosine at the wobble position 34 of tRNA(Arg2). In Rickettsia felis (strain ATCC VR-1525 / URRWXCal2) (Rickettsia azadi), this protein is tRNA-specific adenosine deaminase.